We begin with the raw amino-acid sequence, 1193 residues long: Stress response protein nst1 (1193 aa).

7 disordered regions span residues 1 to 197 (MVPA…SHNI), 288 to 368 (QGSF…TRAA), 422 to 468 (ESLH…EQRM), 508 to 815 (MEEE…MVAR), 857 to 942 (MPPG…TQRD), 966 to 988 (TLSQ…RASF), and 1145 to 1193 (DNNS…PMGF). A compositionally biased stretch (low complexity) spans 10-29 (SPSSTMLNSSSTTAHAAPST). Over residues 53 to 63 (NRKKQKRRQKQ) the composition is skewed to basic residues. Positions 64–73 (AARLAERQLA) are enriched in low complexity. Over residues 76–90 (HVSTDDTTQNGSSHA) the composition is skewed to polar residues. Over residues 91-128 (NPERYHSDDGGADGPDHEQPTNGDVYDKDGQDSMDAHV) the composition is skewed to basic and acidic residues. Positions 129–140 (DSQNPQGPNGTE) are enriched in polar residues. Positions 146-160 (TGRKSKKKKGKKARN) are enriched in basic residues. Low complexity predominate over residues 169 to 182 (TSTPMSTPSVSMSH). The segment covering 312-321 (GQHTRTQGQF) has biased composition (polar residues). Composition is skewed to acidic residues over residues 332-364 (TEED…EDEE) and 434-463 (DDED…DAMT). Positions 448-659 (SQEEEDYEED…EEQAKKDTAK (212 aa)) form a coiled coil. Composition is skewed to basic and acidic residues over residues 508–527 (MEEE…EAQK) and 537–675 (QAKE…DQAK). Residues 722-740 (RQPSQQDSHSSSPHSQAPS) show a composition bias toward low complexity. The span at 741–769 (TDPSQASLSPRSMPVSQSSGVASGNSQQG) shows a compositional bias: polar residues. A compositionally biased stretch (low complexity) spans 914-926 (PISRPSPIKRPSS). Positions 933 to 942 (KGGDRTTQRD) are enriched in basic and acidic residues. Low complexity predominate over residues 972 to 986 (PGATAPGTFPGPARA). The span at 1182–1193 (VLRQYSSPPMGF) shows a compositional bias: polar residues.

This sequence belongs to the NST1 family.

The protein localises to the cytoplasm. Its function is as follows. May act as a negative regulator of salt tolerance. This Neosartorya fischeri (strain ATCC 1020 / DSM 3700 / CBS 544.65 / FGSC A1164 / JCM 1740 / NRRL 181 / WB 181) (Aspergillus fischerianus) protein is Stress response protein nst1 (nst1).